Here is a 665-residue protein sequence, read N- to C-terminus: DNA mismatch repair protein MutL (665 aa).

Polar residues-rich tracts occupy residues 348 to 361 (LEAT…NGLS) and 407 to 421 (PSSQ…NSRY). Disordered stretches follow at residues 348–370 (LEAT…AEEG) and 385–445 (VHRG…STSA). Low complexity predominate over residues 426-445 (YSTNAASTNTASNYSHSTSA).

It belongs to the DNA mismatch repair MutL/HexB family.

Functionally, this protein is involved in the repair of mismatches in DNA. It is required for dam-dependent methyl-directed DNA mismatch repair. May act as a 'molecular matchmaker', a protein that promotes the formation of a stable complex between two or more DNA-binding proteins in an ATP-dependent manner without itself being part of a final effector complex. The chain is DNA mismatch repair protein MutL from Shewanella denitrificans (strain OS217 / ATCC BAA-1090 / DSM 15013).